Here is a 297-residue protein sequence, read N- to C-terminus: 4-hydroxy-tetrahydrodipicolinate synthase (297 aa).

Thr46 contributes to the pyruvate binding site. Residue Tyr136 is the Proton donor/acceptor of the active site. Residue Lys165 is the Schiff-base intermediate with substrate of the active site. Thr206 contacts pyruvate.

Belongs to the DapA family. In terms of assembly, homotetramer; dimer of dimers.

The protein localises to the cytoplasm. The enzyme catalyses L-aspartate 4-semialdehyde + pyruvate = (2S,4S)-4-hydroxy-2,3,4,5-tetrahydrodipicolinate + H2O + H(+). Its pathway is amino-acid biosynthesis; L-lysine biosynthesis via DAP pathway; (S)-tetrahydrodipicolinate from L-aspartate: step 3/4. In terms of biological role, catalyzes the condensation of (S)-aspartate-beta-semialdehyde [(S)-ASA] and pyruvate to 4-hydroxy-tetrahydrodipicolinate (HTPA). This chain is 4-hydroxy-tetrahydrodipicolinate synthase, found in Sulfurimonas denitrificans (strain ATCC 33889 / DSM 1251) (Thiomicrospira denitrificans (strain ATCC 33889 / DSM 1251)).